The following is a 540-amino-acid chain: Zinc transporter ZIP5 (540 aa).

The N-terminal stretch at 1 to 20 (MMGSPVSHLLAGFCVWVVLG) is a signal peptide. Residues 21–212 (WVGGSVPNLG…PAPPGDLLSA (192 aa)) are Extracellular-facing. N-linked (GlcNAc...) asparagine glycosylation occurs at N50. The tract at residues 78-101 (HGPLTGRAASPAADNSTHRPQNPE) is disordered. Positions 90–101 (ADNSTHRPQNPE) are enriched in polar residues. N-linked (GlcNAc...) asparagine glycosylation is present at N160. Residues 213-233 (LLQSALAVLLLSLPSPLSLLL) traverse the membrane as a helical segment. The Cytoplasmic portion of the chain corresponds to 234-244 (LRLLGPRLLRP). A helical transmembrane segment spans residues 245-265 (LLGFLGALAVGTLCGDALLHL). At 266–287 (LPHAQEGRHAGPGGLPEKDLGP) the chain is on the extracellular side. Residues 288–308 (GLSVLGGLFLLFVLENMLGLL) traverse the membrane as a helical segment. The Cytoplasmic portion of the chain corresponds to 309–444 (RHRGLRPRCC…LLQSGLSFRR (136 aa)). Positions 324–377 (NLETRNLDPENGSGMALQPLQAAPEPGAQGQREKNSQHPPALAPPGHQGHSHGH) are disordered. S336 is subject to Phosphoserine. H375 carries the pros-methylhistidine modification. Residues 445–465 (LLLLSLVSGALGLGGAVLGVG) form a helical membrane-spanning segment. Residues 466-470 (LSLGP) are Extracellular-facing. The helical transmembrane segment at 471 to 491 (VPLTPWVFGVTAGVFLYVALV) threads the bilayer. Topologically, residues 492–508 (DMLPALLRPPEPLPTPH) are cytoplasmic. A helical membrane pass occupies residues 509–529 (VLLQGLGLLLGGGLMLAITLL). Residues 530 to 540 (EERLLPVTTEG) are Extracellular-facing.

This sequence belongs to the ZIP transporter (TC 2.A.5) family. As to quaternary structure, homodimer. Post-translationally, methylated at His-375 by METTL9. In terms of processing, N-Glycosylated. As to expression, expressed in liver, kidney, pancreas, small intestine, colon, spleen, fetal liver and fetal kidney.

It localises to the basolateral cell membrane. It catalyses the reaction Zn(2+)(in) = Zn(2+)(out). In terms of biological role, uniporter that transports zinc(2+) into polarized cells of enterocytes, pancreatic acinar and endoderm cells across the basolateral membrane and participates, notably, in zinc excretion from the intestine by the uptake of zinc from the blood into the intestine. The transport mechanism is temperature- and concentration-dependent and saturable. In addition, is also a high affinity copper transporter in vitro. Also may regulate glucose-stimulated insulin secretion (GSIS) in islets primarily through the zinc-activated SIRT1-PPARGC1A axis. Could regulate the BMP/TGF-beta (bone morphogenetic protein/transforming growth factor-beta) signaling pathway and modulates extracellular matrix (ECM) proteins of the sclera. Plays a role in eye development. The chain is Zinc transporter ZIP5 from Homo sapiens (Human).